We begin with the raw amino-acid sequence, 356 residues long: Photosynthetic reaction center cytochrome c subunit (356 aa).

Residues 1–20 form the signal peptide; it reads MKQLIVNSVATVALASLVAG. The S-diacylglycerol cysteine moiety is linked to residue Cys-21. Residues Met-94, Cys-107, Cys-110, His-111, Met-130, His-144, Cys-152, Cys-155, His-156, Met-253, Cys-264, Cys-267, His-268, Cys-325, Cys-328, and His-329 each contribute to the heme site.

In terms of assembly, component of the photosynthetic reaction center composed of protein subunits L (PufL), M (PufM), H (PuhA) and cytochrome C (PufC). Post-translationally, binds 4 heme groups per subunit. After the signal sequence is removed, the N-terminal cysteine is modified to form a diacylglyceride thioether, but the alpha-amino group is free and is not N-palmitoylated.

It localises to the cellular chromatophore membrane. The reaction center of purple bacteria contains a tightly bound cytochrome molecule which re-reduces the photo oxidized primary electron donor. The protein is Photosynthetic reaction center cytochrome c subunit of Blastochloris viridis (Rhodopseudomonas viridis).